The sequence spans 750 residues: Cellulose synthase-like protein H1 (750 aa).

The next 2 helical transmembrane spans lie at 27–47 and 52–72; these read LAILFLLLALLLHRVLHDSGA and AALACEAWFTFMWLLNVNAKW. Residues aspartate 137 and aspartate 459 contribute to the active site. 6 helical membrane-spanning segments follow: residues 537–557, 570–590, 608–628, 664–684, 697–717, and 727–747; these read VWPVRAPFELCYALLGPYCLL, GFYIALALFIAYNTYMFMEFI, ITSASAWLLAFLTVILKTLGF, VFIPVTALAMLSVIAIAVGAW, GPGISEFISCGWLVLCFMPLL, and GIPWSIKMKACLLVAIFLLFC.

It belongs to the glycosyltransferase 2 family. Plant cellulose synthase-like H subfamily.

Its subcellular location is the golgi apparatus membrane. Its function is as follows. Thought to be a Golgi-localized beta-glycan synthase that polymerize the backbones of noncellulosic polysaccharides (hemicelluloses) of plant cell wall. The chain is Cellulose synthase-like protein H1 (CSLH1) from Oryza sativa subsp. japonica (Rice).